The chain runs to 168 residues: Photosystem I assembly protein Ycf3 (168 aa).

TPR repeat units lie at residues 35–68 (AFTY…EIDP), 72–105 (SYIL…NPFL), and 120–153 (GEQA…TPGN).

This sequence belongs to the Ycf3 family.

The protein resides in the plastid. Its subcellular location is the chloroplast thylakoid membrane. Essential for the assembly of the photosystem I (PSI) complex. May act as a chaperone-like factor to guide the assembly of the PSI subunits. This Lemna minor (Common duckweed) protein is Photosystem I assembly protein Ycf3.